A 1079-amino-acid chain; its full sequence is Ubiquitin carboxyl-terminal hydrolase 26 (1079 aa).

A compositionally biased stretch (basic residues) spans 1 to 12 (MSRPNTRNKSKR). Residues 1–21 (MSRPNTRNKSKRPRADDCESP) form a disordered region. One can recognise a USP domain in the interval 106–446 (AGLTNLGATC…DAYMLMYKRI (341 aa)). Catalysis depends on Cys-115, which acts as the Nucleophile. His-359 acts as the Proton acceptor in catalysis. The tract at residues 384-419 (GLHPFGEKPGKSSDKTDQKPQGSSTADSVTNDDNNS) is disordered. Positions 388–401 (FGEKPGKSSDKTDQ) are enriched in basic and acidic residues. Over residues 402-417 (KPQGSSTADSVTNDDN) the composition is skewed to polar residues. 3 DUSP domains span residues 495–598 (AYIT…DDFC), 613–715 (DVYR…FPSD), and 738–862 (AVKL…AEIV). A disordered region spans residues 948-972 (EASAAVPVPDRRTSKRSRRTTSGNS). Residues 961 to 1037 (SKRSRRTTSG…LWVKDSEIYE (77 aa)) enclose the Ubiquitin-like domain.

It belongs to the peptidase C19 family.

The protein resides in the nucleus. It catalyses the reaction Thiol-dependent hydrolysis of ester, thioester, amide, peptide and isopeptide bonds formed by the C-terminal Gly of ubiquitin (a 76-residue protein attached to proteins as an intracellular targeting signal).. Recognizes and hydrolyzes the peptide bond at the C-terminal Gly of ubiquitin. Involved in the processing of poly-ubiquitin precursors as well as that of ubiquitinated proteins. Deubiquitinates H2BK143ub1 of histone H2B. The chain is Ubiquitin carboxyl-terminal hydrolase 26 (UBP26) from Oryza sativa subsp. japonica (Rice).